Reading from the N-terminus, the 410-residue chain is Putative ribonuclease E (410 aa).

In terms of domain architecture, S1 motif spans 39–119 (SNIYKGKIVR…GTKGALLTTF (81 aa)). The Mg(2+) site is built by Asp-303 and Asp-346.

This sequence belongs to the RNase E/G family. RNase E subfamily. Component of the RNA degradosome, which is a multiprotein complex involved in RNA processing and mRNA degradation. Within the RNA degradosome, RNase E assembles into a homotetramer formed by a dimer of dimers. Requires Mg(2+) as cofactor.

The protein resides in the cytoplasm. It localises to the cell inner membrane. The enzyme catalyses Endonucleolytic cleavage of single-stranded RNA in A- and U-rich regions.. Its function is as follows. Endoribonuclease that plays a central role in RNA processing and decay. Required for the maturation of 5S and 16S rRNAs and the majority of tRNAs. Also involved in the degradation of most mRNAs. The protein is Putative ribonuclease E (rne) of Buchnera aphidicola subsp. Baizongia pistaciae (strain Bp).